A 236-amino-acid chain; its full sequence is Large ribosomal subunit protein uL1 (236 aa).

Belongs to the universal ribosomal protein uL1 family. As to quaternary structure, part of the 50S ribosomal subunit.

Binds directly to 23S rRNA. The L1 stalk is quite mobile in the ribosome, and is involved in E site tRNA release. In terms of biological role, protein L1 is also a translational repressor protein, it controls the translation of the L11 operon by binding to its mRNA. This Corynebacterium glutamicum (strain R) protein is Large ribosomal subunit protein uL1.